Reading from the N-terminus, the 236-residue chain is Glucosamine-6-phosphate deaminase (236 aa).

Asp-62 serves as the catalytic Proton acceptor; for enolization step. Asn-128 serves as the catalytic For ring-opening step. The active-site Proton acceptor; for ring-opening step is His-130. The active-site For ring-opening step is the Glu-135.

Belongs to the glucosamine/galactosamine-6-phosphate isomerase family. NagB subfamily.

It catalyses the reaction alpha-D-glucosamine 6-phosphate + H2O = beta-D-fructose 6-phosphate + NH4(+). It functions in the pathway amino-sugar metabolism; N-acetylneuraminate degradation; D-fructose 6-phosphate from N-acetylneuraminate: step 5/5. In terms of biological role, catalyzes the reversible isomerization-deamination of glucosamine 6-phosphate (GlcN6P) to form fructose 6-phosphate (Fru6P) and ammonium ion. The protein is Glucosamine-6-phosphate deaminase of Lacticaseibacillus paracasei (strain ATCC 334 / BCRC 17002 / CCUG 31169 / CIP 107868 / KCTC 3260 / NRRL B-441) (Lactobacillus paracasei).